Consider the following 965-residue polypeptide: Villin-3 (965 aa).

Gelsolin-like repeat units follow at residues 27-79, 150-190, 262-304, 401-452, 533-573, and 635-676; these read ENFE…DEAG, VHLK…QERA, GQVE…EERK, ANSK…EDQE, NKAL…EQQE, and FQVE…KEKQ. 2 stretches are compositionally biased toward low complexity: residues 769–780 and 808–828; these read AFNSSSGRTSSP and SSPS…ASQR. Disordered regions lie at residues 769 to 828 and 840 to 906; these read AFNS…ASQR and TAEK…GVTF. A compositionally biased stretch (acidic residues) spans 865 to 879; the sequence is EATEEATEAKEEEEV. Position 880 is a phosphoserine (serine 880). One can recognise an HP domain in the interval 900-965; it reads ETTGVTFTYE…DLLKKKFNLF (66 aa).

It belongs to the villin/gelsolin family. As to expression, expressed in all tissues examined, including root hairs.

It localises to the cytoplasm. The protein localises to the cytoskeleton. Functionally, binds actin and actin filament bundles in a Ca(2+)-insensitive manner, but severs actin filaments in a calcium-dependent manner, regardless of the presence or not of VLN1 (AC O81643). Acts redundantly with VLN2 (AC O81644) to generate thick actin filament bundles, to regulate directional organ growth and in sclerenchyma development. In Arabidopsis thaliana (Mouse-ear cress), this protein is Villin-3.